The chain runs to 104 residues: Large ribosomal subunit protein uL24 (104 aa).

It belongs to the universal ribosomal protein uL24 family. As to quaternary structure, part of the 50S ribosomal subunit.

Its function is as follows. One of two assembly initiator proteins, it binds directly to the 5'-end of the 23S rRNA, where it nucleates assembly of the 50S subunit. One of the proteins that surrounds the polypeptide exit tunnel on the outside of the subunit. This Pseudoalteromonas translucida (strain TAC 125) protein is Large ribosomal subunit protein uL24.